The chain runs to 100 residues: UPF0213 protein CKO_04549 (100 aa).

The GIY-YIG domain maps to 2-77 (TPWYLYLIRT…KRLTKRQKER (76 aa)).

This sequence belongs to the UPF0213 family.

In Citrobacter koseri (strain ATCC BAA-895 / CDC 4225-83 / SGSC4696), this protein is UPF0213 protein CKO_04549.